The sequence spans 223 residues: Ribose-5-phosphate isomerase A (223 aa).

Substrate contacts are provided by residues 26-29 (TGST), 82-85 (DGAD), and 95-98 (KGGG). The active-site Proton acceptor is Glu-104. Lys-122 serves as a coordination point for substrate.

It belongs to the ribose 5-phosphate isomerase family. In terms of assembly, homodimer.

The enzyme catalyses aldehydo-D-ribose 5-phosphate = D-ribulose 5-phosphate. It functions in the pathway carbohydrate degradation; pentose phosphate pathway; D-ribose 5-phosphate from D-ribulose 5-phosphate (non-oxidative stage): step 1/1. In terms of biological role, catalyzes the reversible conversion of ribose-5-phosphate to ribulose 5-phosphate. This Streptococcus agalactiae serotype Ia (strain ATCC 27591 / A909 / CDC SS700) protein is Ribose-5-phosphate isomerase A.